A 39-amino-acid polypeptide reads, in one-letter code: Cytochrome b6-f complex subunit 5 (39 aa).

Residues 5-25 traverse the membrane as a helical segment; that stretch reads LLCGIVLGLVPITLLGLFVSA.

Belongs to the PetG family. The 4 large subunits of the cytochrome b6-f complex are cytochrome b6, subunit IV (17 kDa polypeptide, PetD), cytochrome f and the Rieske protein, while the 4 small subunits are PetG, PetL, PetM and PetN. The complex functions as a dimer.

Its subcellular location is the cellular thylakoid membrane. Functionally, component of the cytochrome b6-f complex, which mediates electron transfer between photosystem II (PSII) and photosystem I (PSI), cyclic electron flow around PSI, and state transitions. PetG is required for either the stability or assembly of the cytochrome b6-f complex. This is Cytochrome b6-f complex subunit 5 from Prochlorococcus marinus subsp. pastoris (strain CCMP1986 / NIES-2087 / MED4).